The primary structure comprises 239 residues: Ribose-5-phosphate isomerase A (239 aa).

Residues 40-43 (SGST), 96-99 (DGAD), and 110-113 (KGGG) each bind substrate. The active-site Proton acceptor is glutamate 119. Lysine 137 provides a ligand contact to substrate.

Belongs to the ribose 5-phosphate isomerase family. In terms of assembly, homodimer.

It catalyses the reaction aldehydo-D-ribose 5-phosphate = D-ribulose 5-phosphate. The protein operates within carbohydrate degradation; pentose phosphate pathway; D-ribose 5-phosphate from D-ribulose 5-phosphate (non-oxidative stage): step 1/1. Its function is as follows. Catalyzes the reversible conversion of ribose-5-phosphate to ribulose 5-phosphate. This chain is Ribose-5-phosphate isomerase A, found in Methanococcus maripaludis (strain DSM 14266 / JCM 13030 / NBRC 101832 / S2 / LL).